A 161-amino-acid polypeptide reads, in one-letter code: Nucleotide-binding protein Bpro_1596 (161 aa).

It belongs to the YajQ family.

Its function is as follows. Nucleotide-binding protein. This chain is Nucleotide-binding protein Bpro_1596, found in Polaromonas sp. (strain JS666 / ATCC BAA-500).